The following is a 67-amino-acid chain: Large ribosomal subunit protein uL29 (67 aa).

This sequence belongs to the universal ribosomal protein uL29 family.

In Clostridium acetobutylicum (strain ATCC 824 / DSM 792 / JCM 1419 / IAM 19013 / LMG 5710 / NBRC 13948 / NRRL B-527 / VKM B-1787 / 2291 / W), this protein is Large ribosomal subunit protein uL29.